The following is a 112-amino-acid chain: UPF0060 membrane protein Daro_2632 (112 aa).

4 helical membrane-spanning segments follow: residues 7–27 (VLGLFAITALAEIIGCYLPWL), 34–54 (PVWLLIPAAVSLGLFAWLLTL), 59–79 (AGRIYAAYGGVYVAIALIWLW), and 89–109 (WDLVGSAVSLAGMAIIMLQPA).

It belongs to the UPF0060 family.

Its subcellular location is the cell inner membrane. The polypeptide is UPF0060 membrane protein Daro_2632 (Dechloromonas aromatica (strain RCB)).